Reading from the N-terminus, the 152-residue chain is MATLSLLSTGVGAAITNRTPSASLTFITGSRTTNKRVSFNGGSARSGSLHCSFLAPSSSLSSNFSGLSLGLDLTSNTGVSTDRCRRFVVRAGKAALCLTKRSRSRKSLARTHGFRLRMSTTSGRALLKRRRAKGRKILCTKTNPSSGKRASP.

Residues 1 to 91 constitute a chloroplast transit peptide; that stretch reads MATLSLLSTG…DRCRRFVVRA (91 aa).

In terms of assembly, component of the chloroplast large ribosomal subunit (LSU). Mature 70S chloroplast ribosomes of higher plants consist of a small (30S) and a large (50S) subunit. The 30S small subunit contains 1 molecule of ribosomal RNA (16S rRNA) and 24 different proteins. The 50S large subunit contains 3 rRNA molecules (23S, 5S and 4.5S rRNA) and 33 different proteins.

It is found in the plastid. Its subcellular location is the chloroplast. Functionally, component of the chloroplast ribosome (chloro-ribosome), a dedicated translation machinery responsible for the synthesis of chloroplast genome-encoded proteins, including proteins of the transcription and translation machinery and components of the photosynthetic apparatus. The protein is Large ribosomal subunit protein bL34c (RPL34) of Spinacia oleracea (Spinach).